We begin with the raw amino-acid sequence, 1040 residues long: Multidrug resistance protein MdtB (1040 aa).

Transmembrane regions (helical) follow at residues 16–36, 342–362, 369–389, 396–416, 440–460, 472–492, 537–557, 863–883, 888–908, 911–931, 968–988, and 998–1018; these read FIMRPVATTLLMVAILLAGII, DTQFELMLAIALVVMIIYLFL, IIPGVAVPLSLVGTFAVMVFL, LTLMALTIATGFVVDDAIVVI, IGFTIISLTFSLIAVLIPLLF, FAVTLAVAILISAVVSLTLTP, WLTLGVALSTLALSIILWVFI, LGSTVWLVVAAVVAMYIVLGV, FIHPITILSTLPTAGVGALLA, LAGSELDVIAIIGIILLIGIV, ILMTTLAALLGALPLMLSTGV, and IGMVGGLMLSQVLTLFTTPVI.

The protein belongs to the resistance-nodulation-cell division (RND) (TC 2.A.6) family. MdtB subfamily. In terms of assembly, part of a tripartite efflux system composed of MdtA, MdtB and MdtC. MdtB forms a heteromultimer with MdtC.

Its subcellular location is the cell inner membrane. This Klebsiella pneumoniae subsp. pneumoniae (strain ATCC 700721 / MGH 78578) protein is Multidrug resistance protein MdtB.